The sequence spans 415 residues: Gamma-glutamyl phosphate reductase (415 aa).

The protein belongs to the gamma-glutamyl phosphate reductase family.

Its subcellular location is the cytoplasm. The catalysed reaction is L-glutamate 5-semialdehyde + phosphate + NADP(+) = L-glutamyl 5-phosphate + NADPH + H(+). It functions in the pathway amino-acid biosynthesis; L-proline biosynthesis; L-glutamate 5-semialdehyde from L-glutamate: step 2/2. Its function is as follows. Catalyzes the NADPH-dependent reduction of L-glutamate 5-phosphate into L-glutamate 5-semialdehyde and phosphate. The product spontaneously undergoes cyclization to form 1-pyrroline-5-carboxylate. The polypeptide is Gamma-glutamyl phosphate reductase (Bacillus mycoides (strain KBAB4) (Bacillus weihenstephanensis)).